Consider the following 406-residue polypeptide: ESX-5 secretion system protein EccE5 (406 aa).

2 helical membrane-spanning segments follow: residues 9 to 29 and 43 to 63; these read LALS…ILAV and VAWW…VVSY.

This sequence belongs to the EccE family. In terms of assembly, part of the ESX-5 / type VII secretion system (T7SS), which is composed of cytosolic and membrane components. The ESX-5 membrane complex is composed of EccB5, EccC5, EccD5 and EccE5.

It localises to the cell inner membrane. Its function is as follows. Part of the ESX-5 specialized secretion system, which is responsible for the secretion of EsxN and a number of PE_PGRS and PPE proteins, including PPE41. In Mycobacterium tuberculosis (strain ATCC 25618 / H37Rv), this protein is ESX-5 secretion system protein EccE5.